Consider the following 743-residue polypeptide: Dolichyl-phosphate-mannose--protein mannosyltransferase 5 (743 aa).

The Lumenal portion of the chain corresponds to 1-46 (MNKEHLLKVDPIPDVTIKRGPLRSFLITKPCDNLSSLRTVTSSKEK). Residue Asn33 is glycosylated (N-linked (GlcNAc...) asparagine). The chain crosses the membrane as a helical span at residues 47–67 (LLVGCLLIFTAIVRLHNISLP). Over 68-129 (NSVVFGENEV…IGTEYTANVP (62 aa)) the chain is Cytoplasmic. Residues 130–150 (YVAMRFFSATLGIVSVLVLYL) form a helical membrane-spanning segment. Residues 151 to 158 (TLRVSGVK) are Lumenal-facing. Residues 159 to 179 (IAVAAICAVCFAIENSFVTLS) form a helical membrane-spanning segment. Position 180 (Arg180) is a topological domain, cytoplasmic. A helical membrane pass occupies residues 181–201 (FTLIEGPFVFFMACAVYFFRR). Over 202–231 (SELYLPNSCKANKSLLAASIALGFAVSSKW) the chain is Lumenal. Asn213 carries N-linked (GlcNAc...) asparagine glycosylation. Residues 232-252 (AGLFTIAWAGIIVLWRVWFMI) form a helical membrane-spanning segment. The Cytoplasmic segment spans residues 253–264 (GDLSRPIGSSIK). The chain crosses the membrane as a helical span at residues 265 to 285 (YMAFQFTCLLAIPAFIYFLIF). The Lumenal segment spans residues 286–583 (SVHIKTLNVN…GREVYFLGNA (298 aa)). An MIR 1 domain is found at 320–374 (VAEVAVGSAVSLNHVGTAGGYLHSHLHNYPAGSMQQQVTLYPHIDQNNKWIIELA). N-linked (GlcNAc...) asparagine glycans are attached at residues Asn380 and Asn386. 2 MIR domains span residues 384-444 (FQNL…IEID) and 454-510 (QEHI…IEEN). Residues 584–604 (VLWWSVTAFICTFIIGVAVEL) traverse the membrane as a helical segment. Residues 605–623 (LAWKLGVNILRDKHIINFH) are Cytoplasmic-facing. A helical transmembrane segment spans residues 624-644 (YQVFQYLLGFAAHYFPYFFVG). Topologically, residues 645-646 (QK) are lumenal. The helical transmembrane segment at 647–667 (LFLYDYLPAYYFGILAFGHAL) threads the bilayer. Over 668 to 683 (DLISTYISNKRNNTGY) the chain is Cytoplasmic. A helical transmembrane segment spans residues 684–704 (IVVAIFMVVCFYFFSEHSPLI). Topologically, residues 705 to 743 (YATGWSSNLCKRSKWLGSWDFYCNSLLLSDSHYELNAES) are lumenal.

It belongs to the glycosyltransferase 39 family. As to quaternary structure, PMT3 and PMT5 form a functional heterodimer. Also forms a minor complex with PMT2.

The protein resides in the endoplasmic reticulum membrane. The enzyme catalyses a di-trans,poly-cis-dolichyl beta-D-mannosyl phosphate + L-seryl-[protein] = 3-O-(alpha-D-mannosyl)-L-seryl-[protein] + a di-trans,poly-cis-dolichyl phosphate + H(+). It catalyses the reaction a di-trans,poly-cis-dolichyl beta-D-mannosyl phosphate + L-threonyl-[protein] = 3-O-(alpha-D-mannosyl)-L-threonyl-[protein] + a di-trans,poly-cis-dolichyl phosphate + H(+). It functions in the pathway protein modification; protein glycosylation. Its function is as follows. Protein O-mannosyltransferase involved in O-glycosylation which is essential for cell wall rigidity. Forms a heterodimeric complex with PMT3 and more rarely with PMT2 to transfer mannose from Dol-P-mannose to Ser or Thr residues on proteins. This chain is Dolichyl-phosphate-mannose--protein mannosyltransferase 5, found in Saccharomyces cerevisiae (strain ATCC 204508 / S288c) (Baker's yeast).